Reading from the N-terminus, the 258-residue chain is Ribosomal RNA small subunit methyltransferase J (258 aa).

S-adenosyl-L-methionine contacts are provided by residues 106 to 107 (RD), 122 to 123 (ER), and Asp181.

This sequence belongs to the methyltransferase superfamily. RsmJ family.

The protein localises to the cytoplasm. It catalyses the reaction guanosine(1516) in 16S rRNA + S-adenosyl-L-methionine = N(2)-methylguanosine(1516) in 16S rRNA + S-adenosyl-L-homocysteine + H(+). Specifically methylates the guanosine in position 1516 of 16S rRNA. This Pseudoalteromonas atlantica (strain T6c / ATCC BAA-1087) protein is Ribosomal RNA small subunit methyltransferase J.